We begin with the raw amino-acid sequence, 523 residues long: Cytochrome P450 CYP82J17 (523 aa).

The helical transmembrane segment at 4–24 (FLSQPITIVLAILSVLLYNIW) threads the bilayer. Cysteine 462 is a heme binding site.

Belongs to the cytochrome P450 family. In terms of tissue distribution, mainly expressed in leaves and seed pods and, to a lower extent, in flowers and stems.

It is found in the membrane. Its pathway is steroid metabolism; cholesterol metabolism. Its function is as follows. Involved in the biosynthesis of spiroketal steroid and saponin natural products from cholesterol such as diosgenin and analogs (e.g. furostanol and spirostanol), plant defense compounds used as main precursors for the industrial production of steroid hormones. During the 5,6-spiroketalization of cholesterol, may catalyze the 27-monohydroxylation of furostanol-type steroid to an intermediate product that undergoes a stereospecific formation of the terminal heterocycle to yield diosgenin. This Trigonella foenum-graecum (Fenugreek) protein is Cytochrome P450 CYP82J17.